The sequence spans 453 residues: Tubulin alpha-1 chain (453 aa).

Positions 11, 71, 144, 145, 179, 206, and 228 each coordinate GTP. Mg(2+) is bound at residue Glu-71. Glu-254 is an active-site residue. A disordered region spans residues 433 to 453; it reads EEVGAETADGDGEEEEFGEEY.

This sequence belongs to the tubulin family. As to quaternary structure, dimer of alpha and beta chains. A typical microtubule is a hollow water-filled tube with an outer diameter of 25 nm and an inner diameter of 15 nM. Alpha-beta heterodimers associate head-to-tail to form protofilaments running lengthwise along the microtubule wall with the beta-tubulin subunit facing the microtubule plus end conferring a structural polarity. Microtubules usually have 13 protofilaments but different protofilament numbers can be found in some organisms and specialized cells. The cofactor is Mg(2+). In terms of processing, undergoes a tyrosination/detyrosination cycle, the cyclic removal and re-addition of a C-terminal tyrosine residue by the enzymes tubulin tyrosine carboxypeptidase (TTCP) and tubulin tyrosine ligase (TTL), respectively.

The protein localises to the cytoplasm. It localises to the cytoskeleton. The catalysed reaction is GTP + H2O = GDP + phosphate + H(+). Tubulin is the major constituent of microtubules, a cylinder consisting of laterally associated linear protofilaments composed of alpha- and beta-tubulin heterodimers. Microtubules grow by the addition of GTP-tubulin dimers to the microtubule end, where a stabilizing cap forms. Below the cap, tubulin dimers are in GDP-bound state, owing to GTPase activity of alpha-tubulin. This chain is Tubulin alpha-1 chain (TUBA1), found in Pelvetia fastigiata (Brown alga).